Here is a 270-residue protein sequence, read N- to C-terminus: Sulfur carrier protein FdhD (270 aa).

Cys116 (cysteine persulfide intermediate) is an active-site residue. 253 to 258 (FAREGK) is a binding site for Mo-bis(molybdopterin guanine dinucleotide).

It belongs to the FdhD family.

It localises to the cytoplasm. Required for formate dehydrogenase (FDH) activity. Acts as a sulfur carrier protein that transfers sulfur from IscS to the molybdenum cofactor prior to its insertion into FDH. The chain is Sulfur carrier protein FdhD from Haemophilus influenzae (strain 86-028NP).